A 365-amino-acid chain; its full sequence is Pituitary-specific positive transcription factor 1 (365 aa).

Residues 5–12 carry the 9aaTAD motif; it reads AFSADSFT. A disordered region spans residues 160 to 191; the sequence is PAVLSEEPPLGGTKDLRLRSRPPDDPPDMDSP. Residues 173-183 show a composition bias toward basic and acidic residues; it reads KDLRLRSRPPD. One can recognise a POU-specific domain in the interval 188-262; it reads MDSPQIRELE…ILAKWLDEAE (75 aa). The homeobox DNA-binding region spans 278 to 337; sequence KRKRRTTISLGAKEALERSFREKIKPSSQEIVRMAEGLHLEKEVVRVWFCNRRQREKRVK.

The protein belongs to the POU transcription factor family. Class-1 subfamily.

Its subcellular location is the nucleus. Its function is as follows. Transcription factor that activates growth hormone and prolactin genes. Specifically binds to the consensus sequence 5'-TAAAT-3'. This chain is Pituitary-specific positive transcription factor 1 (pou1f1), found in Oncorhynchus keta (Chum salmon).